The primary structure comprises 146 residues: Hemoglobin subunit beta (146 aa).

Val1 is modified (N-acetylvaline). The region spanning 2–146 (NLTAAEKTQV…VANALAHKYH (145 aa)) is the Globin domain. The residue at position 12 (Thr12) is a Phosphothreonine. Position 59 is an N6-acetyllysine (Lys59). His63 serves as a coordination point for heme b. Lys82 bears the N6-acetyllysine mark. His92 is a binding site for heme b. S-nitrosocysteine is present on Cys93. Lys144 carries the N6-acetyllysine modification.

It belongs to the globin family. Heterotetramer of two alpha chains and two beta chains. In terms of tissue distribution, red blood cells.

In terms of biological role, involved in oxygen transport from the lung to the various peripheral tissues. The chain is Hemoglobin subunit beta (HBB) from Loxodonta africana (African elephant).